A 209-amino-acid chain; its full sequence is Redox-sensing transcriptional repressor Rex (209 aa).

A DNA-binding region (H-T-H motif) is located at residues 16–55 (VYIQVLTGLKRDGVEVISSEKLARACSVNPSQIRKDLAYF). Position 90–95 (90–95 (GVGNLG)) interacts with NAD(+).

This sequence belongs to the transcriptional regulatory Rex family. As to quaternary structure, homodimer.

The protein localises to the cytoplasm. Functionally, modulates transcription in response to changes in cellular NADH/NAD(+) redox state. The chain is Redox-sensing transcriptional repressor Rex from Maridesulfovibrio salexigens (strain ATCC 14822 / DSM 2638 / NCIMB 8403 / VKM B-1763) (Desulfovibrio salexigens).